The chain runs to 158 residues: NAD(P)H-quinone oxidoreductase subunit N (158 aa).

This sequence belongs to the complex I NdhN subunit family. In terms of assembly, NDH-1 can be composed of about 15 different subunits; different subcomplexes with different compositions have been identified which probably have different functions.

Its subcellular location is the cellular thylakoid membrane. The catalysed reaction is a plastoquinone + NADH + (n+1) H(+)(in) = a plastoquinol + NAD(+) + n H(+)(out). It carries out the reaction a plastoquinone + NADPH + (n+1) H(+)(in) = a plastoquinol + NADP(+) + n H(+)(out). Functionally, NDH-1 shuttles electrons from an unknown electron donor, via FMN and iron-sulfur (Fe-S) centers, to quinones in the respiratory and/or the photosynthetic chain. The immediate electron acceptor for the enzyme in this species is believed to be plastoquinone. Couples the redox reaction to proton translocation, and thus conserves the redox energy in a proton gradient. Cyanobacterial NDH-1 also plays a role in inorganic carbon-concentration. This Trichodesmium erythraeum (strain IMS101) protein is NAD(P)H-quinone oxidoreductase subunit N.